The primary structure comprises 216 residues: Transmembrane emp24 domain-containing protein eca (216 aa).

Residues 1-20 form the signal peptide; the sequence is MRDQFISLALILCVLHSACG. At 21-182 the chain is on the lumenal side; it reads LYFHISETER…FRHTSESTNS (162 aa). Positions 30-126 constitute a GOLD domain; that stretch reads RKCFIEEVPD…QLRVHLDIQV (97 aa). The stretch at 134 to 164 forms a coiled coil; the sequence is AHVAQKEKLTELQLRIRQLLDQVEQITKEQN. The chain crosses the membrane as a helical span at residues 183–203; sequence RVLWWSLAQTVVLVCMGFWQM. Topologically, residues 204 to 216 are cytoplasmic; the sequence is RHLKSFFEAKKLV. The Prevents secretion from ER motif lies at 213 to 216; that stretch reads KKLV.

The protein belongs to the EMP24/GP25L family.

The protein localises to the endoplasmic reticulum membrane. In terms of biological role, eca and bai are essential, though not redundant, for dorsoventral patterning of the embryo. Specifically required during early embryogenesis for the activity of maternal tkv, while the zygotic tkv is not affected. Involved in Golgi organization. The polypeptide is Transmembrane emp24 domain-containing protein eca (Drosophila melanogaster (Fruit fly)).